Here is a 474-residue protein sequence, read N- to C-terminus: Cysteine--tRNA ligase (474 aa).

Cysteine 27 contacts Zn(2+). The short motif at 29–39 (PTVYNYIHIGN) is the 'HIGH' region element. Zn(2+) is bound by residues cysteine 212, histidine 237, and glutamate 241. The 'KMSKS' region signature appears at 271 to 275 (KMSKS). Residue lysine 274 coordinates ATP.

This sequence belongs to the class-I aminoacyl-tRNA synthetase family. In terms of assembly, monomer. Zn(2+) serves as cofactor.

The protein localises to the cytoplasm. It carries out the reaction tRNA(Cys) + L-cysteine + ATP = L-cysteinyl-tRNA(Cys) + AMP + diphosphate. This is Cysteine--tRNA ligase from Lactobacillus delbrueckii subsp. bulgaricus (strain ATCC BAA-365 / Lb-18).